An 848-amino-acid chain; its full sequence is Alanine--tRNA ligase (848 aa).

Residues His-553, His-557, Cys-654, and His-658 each coordinate Zn(2+).

The protein belongs to the class-II aminoacyl-tRNA synthetase family. Zn(2+) serves as cofactor.

It is found in the cytoplasm. The enzyme catalyses tRNA(Ala) + L-alanine + ATP = L-alanyl-tRNA(Ala) + AMP + diphosphate. Its function is as follows. Catalyzes the attachment of alanine to tRNA(Ala) in a two-step reaction: alanine is first activated by ATP to form Ala-AMP and then transferred to the acceptor end of tRNA(Ala). Also edits incorrectly charged Ser-tRNA(Ala) and Gly-tRNA(Ala) via its editing domain. This is Alanine--tRNA ligase from Neorickettsia sennetsu (strain ATCC VR-367 / Miyayama) (Ehrlichia sennetsu).